A 242-amino-acid chain; its full sequence is 1-(5-phosphoribosyl)-5-[(5-phosphoribosylamino)methylideneamino] imidazole-4-carboxamide isomerase (242 aa).

Asp-10 serves as the catalytic Proton acceptor. Residue Asp-132 is the Proton donor of the active site.

The protein belongs to the HisA/HisF family.

The protein localises to the cytoplasm. It catalyses the reaction 1-(5-phospho-beta-D-ribosyl)-5-[(5-phospho-beta-D-ribosylamino)methylideneamino]imidazole-4-carboxamide = 5-[(5-phospho-1-deoxy-D-ribulos-1-ylimino)methylamino]-1-(5-phospho-beta-D-ribosyl)imidazole-4-carboxamide. The protein operates within amino-acid biosynthesis; L-histidine biosynthesis; L-histidine from 5-phospho-alpha-D-ribose 1-diphosphate: step 4/9. This is 1-(5-phosphoribosyl)-5-[(5-phosphoribosylamino)methylideneamino] imidazole-4-carboxamide isomerase from Methanopyrus kandleri (strain AV19 / DSM 6324 / JCM 9639 / NBRC 100938).